A 605-amino-acid chain; its full sequence is Protein MLN51 homolog (605 aa).

Composition is skewed to acidic residues over residues 1–16 and 30–40; these read MAPD…SDPD and SDDDEDDEEAD. Disordered stretches follow at residues 1–88, 101–132, 151–275, 350–380, and 544–605; these read MAPD…DGDY, NNDK…KEPF, DAAS…GRPP, TAQT…KVSS, and YQAD…SFSK. The residue at position 30 (Ser30) is a Phosphoserine. Over residues 41 to 57 the composition is skewed to basic and acidic residues; it reads DHDKLRAAIQIHSDEHS. The span at 75 to 87 shows a compositional bias: acidic residues; the sequence is SYGDDDDEEEDGD. Positions 166-192 are enriched in basic and acidic residues; the sequence is QSRDERKWGHDKFEEMNTQKQQYDRRT. 3 stretches are compositionally biased toward polar residues: residues 214–228, 247–265, and 367–380; these read NNSK…QNQF, NGNQ…SSVE, and LYQQ…KVSS. Low complexity predominate over residues 552–567; that stretch reads PSSAGSSSQENSSNNP. Residues 578-593 show a composition bias toward polar residues; the sequence is VTNNGNSQRSNSNPNK.

It belongs to the CASC3 family. Weakly interacts with EIF4A3.

It is found in the nucleus. The protein localises to the cytoplasm. Core component of the splicing-dependent multiprotein exon junction complex (EJC) deposited at splice junctions on mRNAs. The EJC is a dynamic structure consisting of core proteins and several peripheral nuclear and cytoplasmic associated factors that join the complex only transiently either during EJC assembly or during subsequent mRNA metabolism. The EJC marks the position of the exon-exon junction in the mature mRNA for the gene expression machinery and the core components remain bound to spliced mRNAs throughout all stages of mRNA metabolism thereby influencing downstream processes including nuclear mRNA export, subcellular mRNA localization, translation efficiency and nonsense-mediated mRNA decay (NMD). Stimulates the ATPase and RNA-helicase activities of EIF4A3. The sequence is that of Protein MLN51 homolog from Arabidopsis thaliana (Mouse-ear cress).